The sequence spans 200 residues: Imidazoleglycerol-phosphate dehydratase (200 aa).

The protein belongs to the imidazoleglycerol-phosphate dehydratase family.

It localises to the cytoplasm. The catalysed reaction is D-erythro-1-(imidazol-4-yl)glycerol 3-phosphate = 3-(imidazol-4-yl)-2-oxopropyl phosphate + H2O. Its pathway is amino-acid biosynthesis; L-histidine biosynthesis; L-histidine from 5-phospho-alpha-D-ribose 1-diphosphate: step 6/9. The protein is Imidazoleglycerol-phosphate dehydratase of Bifidobacterium animalis subsp. lactis (strain AD011).